We begin with the raw amino-acid sequence, 408 residues long: Bifunctional enzyme IspD/IspF (408 aa).

Residues 1-247 (MNAPFEKDRR…GPAMTELPDI (247 aa)) are 2-C-methyl-D-erythritol 4-phosphate cytidylyltransferase. Residues 248–408 (RVGNGYDVHG…TVAYPGSLGN (161 aa)) are 2-C-methyl-D-erythritol 2,4-cyclodiphosphate synthase. The a divalent metal cation site is built by Asp-254 and His-256. 4-CDP-2-C-methyl-D-erythritol 2-phosphate is bound by residues 254 to 256 (DVH) and 280 to 281 (HS). His-288 provides a ligand contact to a divalent metal cation. 4-CDP-2-C-methyl-D-erythritol 2-phosphate is bound by residues 302 to 304 (DIG), 378 to 381 (TTNE), Phe-385, and Arg-388.

In the N-terminal section; belongs to the IspD/TarI cytidylyltransferase family. IspD subfamily. This sequence in the C-terminal section; belongs to the IspF family. A divalent metal cation serves as cofactor.

It catalyses the reaction 2-C-methyl-D-erythritol 4-phosphate + CTP + H(+) = 4-CDP-2-C-methyl-D-erythritol + diphosphate. It carries out the reaction 4-CDP-2-C-methyl-D-erythritol 2-phosphate = 2-C-methyl-D-erythritol 2,4-cyclic diphosphate + CMP. Its pathway is isoprenoid biosynthesis; isopentenyl diphosphate biosynthesis via DXP pathway; isopentenyl diphosphate from 1-deoxy-D-xylulose 5-phosphate: step 2/6. It participates in isoprenoid biosynthesis; isopentenyl diphosphate biosynthesis via DXP pathway; isopentenyl diphosphate from 1-deoxy-D-xylulose 5-phosphate: step 4/6. Functionally, bifunctional enzyme that catalyzes the formation of 4-diphosphocytidyl-2-C-methyl-D-erythritol from CTP and 2-C-methyl-D-erythritol 4-phosphate (MEP) (IspD), and catalyzes the conversion of 4-diphosphocytidyl-2-C-methyl-D-erythritol 2-phosphate (CDP-ME2P) to 2-C-methyl-D-erythritol 2,4-cyclodiphosphate (ME-CPP) with a corresponding release of cytidine 5-monophosphate (CMP) (IspF). The polypeptide is Bifunctional enzyme IspD/IspF (Chelativorans sp. (strain BNC1)).